The sequence spans 245 residues: Probable octanoyltransferase 2 (245 aa).

In terms of domain architecture, BPL/LPL catalytic spans 38–227; the sequence is MEYKPVLYFQ…SIEKEFDIKE (190 aa). Substrate-binding positions include 89–96, 157–159, and 170–172; these read RGGYETYH, SIG, and GMA. Cys188 (acyl-thioester intermediate) is an active-site residue.

Belongs to the LipB family.

Its subcellular location is the cytoplasm. It catalyses the reaction octanoyl-[ACP] + L-lysyl-[protein] = N(6)-octanoyl-L-lysyl-[protein] + holo-[ACP] + H(+). The protein operates within protein modification; protein lipoylation via endogenous pathway; protein N(6)-(lipoyl)lysine from octanoyl-[acyl-carrier-protein]: step 1/2. Catalyzes the transfer of endogenously produced octanoic acid from octanoyl-acyl-carrier-protein onto the lipoyl domains of lipoate-dependent enzymes. Lipoyl-ACP can also act as a substrate although octanoyl-ACP is likely to be the physiological substrate. This Picrophilus torridus (strain ATCC 700027 / DSM 9790 / JCM 10055 / NBRC 100828 / KAW 2/3) protein is Probable octanoyltransferase 2.